Here is a 217-residue protein sequence, read N- to C-terminus: Growth hormone variant (217 aa).

Residues 1–26 form the signal peptide; sequence MAAGSWTCLILAIALLCLPWLQEGSA. 2 cysteine pairs are disulfide-bonded: Cys-79-Cys-191 and Cys-208-Cys-215. Phosphoserine occurs at positions 132 and 176.

It belongs to the somatotropin/prolactin family. As to expression, expressed in the placenta.

It localises to the secreted. Its function is as follows. Plays an important role in growth control. Its major role in stimulating body growth is to stimulate the liver and other tissues to secrete IGF1. It stimulates both the differentiation and proliferation of myoblasts. It also stimulates amino acid uptake and protein synthesis in muscle and other tissues. This is Growth hormone variant (GH2) from Macaca mulatta (Rhesus macaque).